The sequence spans 358 residues: Holliday junction branch migration complex subunit RuvB (358 aa).

The segment at 1 to 183 (MAEPSLVSGG…FGFTGHLEFY (183 aa)) is large ATPase domain (RuvB-L). Residues Leu-22, Arg-23, Gly-64, Lys-67, Thr-68, Thr-69, 130-132 (EDF), Arg-173, Tyr-183, and Arg-220 contribute to the ATP site. A Mg(2+)-binding site is contributed by Thr-68. The interval 184-254 (SVAELELVLR…SASAALDMYE (71 aa)) is small ATPAse domain (RuvB-S). Residues 257-358 (ERGLDRLDRS…NHAESVDTVG (102 aa)) are head domain (RuvB-H). DNA is bound by residues Arg-312 and Arg-317.

It belongs to the RuvB family. Homohexamer. Forms an RuvA(8)-RuvB(12)-Holliday junction (HJ) complex. HJ DNA is sandwiched between 2 RuvA tetramers; dsDNA enters through RuvA and exits via RuvB. An RuvB hexamer assembles on each DNA strand where it exits the tetramer. Each RuvB hexamer is contacted by two RuvA subunits (via domain III) on 2 adjacent RuvB subunits; this complex drives branch migration. In the full resolvosome a probable DNA-RuvA(4)-RuvB(12)-RuvC(2) complex forms which resolves the HJ.

It localises to the cytoplasm. The catalysed reaction is ATP + H2O = ADP + phosphate + H(+). Functionally, the RuvA-RuvB-RuvC complex processes Holliday junction (HJ) DNA during genetic recombination and DNA repair, while the RuvA-RuvB complex plays an important role in the rescue of blocked DNA replication forks via replication fork reversal (RFR). RuvA specifically binds to HJ cruciform DNA, conferring on it an open structure. The RuvB hexamer acts as an ATP-dependent pump, pulling dsDNA into and through the RuvAB complex. RuvB forms 2 homohexamers on either side of HJ DNA bound by 1 or 2 RuvA tetramers; 4 subunits per hexamer contact DNA at a time. Coordinated motions by a converter formed by DNA-disengaged RuvB subunits stimulates ATP hydrolysis and nucleotide exchange. Immobilization of the converter enables RuvB to convert the ATP-contained energy into a lever motion, pulling 2 nucleotides of DNA out of the RuvA tetramer per ATP hydrolyzed, thus driving DNA branch migration. The RuvB motors rotate together with the DNA substrate, which together with the progressing nucleotide cycle form the mechanistic basis for DNA recombination by continuous HJ branch migration. Branch migration allows RuvC to scan DNA until it finds its consensus sequence, where it cleaves and resolves cruciform DNA. This is Holliday junction branch migration complex subunit RuvB from Paenarthrobacter aurescens (strain TC1).